Consider the following 581-residue polypeptide: Multidrug and toxin extrusion protein 2 (581 aa).

The Cytoplasmic segment spans residues 1–33; it reads MDSLQDTVPLDHGGCCPALSRLVPRGFGTEMWT. Residues 34–54 traverse the membrane as a helical segment; sequence LFALSGPLFLFQVLTFMIYIV. The Extracellular portion of the chain corresponds to 55–66; sequence STVFCGHLGKVE. Residues 67-87 traverse the membrane as a helical segment; that stretch reads LASVTLAVAFVNVCGVSVGVG. The Cytoplasmic segment spans residues 88-119; that stretch reads LSSACDTLMSQSFGSPNKKHVGVILQRGALVL. Residues 120-140 form a helical membrane-spanning segment; that stretch reads LLCCLPCWALFLNTQHILLLF. Residues 141-153 are Extracellular-facing; that stretch reads RQDPEVSRLTQDY. A helical transmembrane segment spans residues 154–174; the sequence is VMIFIPGLPVIFLYNLLAKYL. Over 175-183 the chain is Cytoplasmic; that stretch reads QNQKITWPQ. The chain crosses the membrane as a helical span at residues 184 to 204; that stretch reads VLSGVVGNCVNGVANYALVSV. At 205–212 the chain is on the extracellular side; sequence LNLGVRGS. A helical transmembrane segment spans residues 213 to 233; the sequence is AYANIISQFAQTVFLLLYIVL. Residues 234-253 lie on the Cytoplasmic side of the membrane; that stretch reads KKLHLETWAGWSSQCLQDWG. The helical transmembrane segment at 254–273 threads the bilayer; it reads PFFSLAVPSMLMICVEWWAY. Over 274 to 317 the chain is Extracellular; sequence EIGSFLMGLLSVVDLSAQAVIYEVATVTYMRHSHHLAYTAHVAR. Residues 318–338 traverse the membrane as a helical segment; it reads IPLGLSIGVCVRVGMALGAAD. Topologically, residues 339 to 346 are cytoplasmic; that stretch reads TVQAKRSA. Residues 347 to 367 traverse the membrane as a helical segment; that stretch reads VSGVLSIVGISLVLGTLISIL. At 368–380 the chain is on the extracellular side; sequence KNQLGHIFTNDED. The chain crosses the membrane as a helical span at residues 381-401; it reads VIALVSQVLPVYSVFHVFEAI. The Cytoplasmic segment spans residues 402–420; that stretch reads CCVYGGVLRGTGKQAFGAA. The chain crosses the membrane as a helical span at residues 421 to 441; the sequence is VNAITYYIIGLPLGILLTFVV. Residues 442 to 444 lie on the Extracellular side of the membrane; the sequence is RMR. Residues 445-465 traverse the membrane as a helical segment; that stretch reads IMGLWLGMLACVFLATAAFVA. Residues 466–557 lie on the Cytoplasmic side of the membrane; that stretch reads YTARLDWKLA…LSVKQLVIRR (92 aa). The segment at 481 to 513 is disordered; the sequence is KHSGQQQQQQRAESTATRSGPEKAVLSSVATGS. A helical transmembrane segment spans residues 558–578; it reads GAALGAASATLMVGLTVRILA. The Extracellular portion of the chain corresponds to 579–581; sequence TRH.

The protein belongs to the multi antimicrobial extrusion (MATE) (TC 2.A.66.1) family.

The protein localises to the cell membrane. It is found in the apical cell membrane. The catalysed reaction is thiamine(out) + H(+)(in) = thiamine(in) + H(+)(out). The enzyme catalyses estrone 3-sulfate(in) + H(+)(out) = estrone 3-sulfate(out) + H(+)(in). It carries out the reaction creatinine(in) + H(+)(out) = creatinine(out) + H(+)(in). Functionally, multidrug efflux pump that functions as a H(+)/organic cation antiporter. Mediates the efflux of cationic compounds, such as the model cations, tetraethylammonium (TEA) and 1-methyl-4-phenylpyridinium (MPP+), the platinum-based drug oxaliplatin or weak bases that are positively charged at physiological pH, cimetidine or the antidiabetic drug metformin. Mediates the efflux of the endogenous compounds creatinine, thiamine and estrone-3-sulfate. Plays a physiological role in the excretion of drugs, toxins and endogenous metabolites through the kidney. In Pongo abelii (Sumatran orangutan), this protein is Multidrug and toxin extrusion protein 2 (SLC47A2).